Consider the following 512-residue polypeptide: Histidine ammonia-lyase (512 aa).

Residues 145 to 147 (ASG) constitute a cross-link (5-imidazolinone (Ala-Gly)). At Ser-146 the chain carries 2,3-didehydroalanine (Ser).

Belongs to the PAL/histidase family. Post-translationally, contains an active site 4-methylidene-imidazol-5-one (MIO), which is formed autocatalytically by cyclization and dehydration of residues Ala-Ser-Gly.

It localises to the cytoplasm. It carries out the reaction L-histidine = trans-urocanate + NH4(+). The protein operates within amino-acid degradation; L-histidine degradation into L-glutamate; N-formimidoyl-L-glutamate from L-histidine: step 1/3. This Pseudomonas fluorescens (strain SBW25) protein is Histidine ammonia-lyase.